Here is a 172-residue protein sequence, read N- to C-terminus: Small ribosomal subunit protein uS5 (172 aa).

The S5 DRBM domain maps to 17–80 (LREKMISVNR…EQARRNMFKV (64 aa)).

Belongs to the universal ribosomal protein uS5 family. In terms of assembly, part of the 30S ribosomal subunit. Contacts proteins S4 and S8.

With S4 and S12 plays an important role in translational accuracy. Its function is as follows. Located at the back of the 30S subunit body where it stabilizes the conformation of the head with respect to the body. This chain is Small ribosomal subunit protein uS5, found in Burkholderia lata (strain ATCC 17760 / DSM 23089 / LMG 22485 / NCIMB 9086 / R18194 / 383).